Consider the following 195-residue polypeptide: Putative nucleotidase BH1399 (195 aa).

The protein belongs to the 5'(3')-deoxyribonucleotidase family.

This chain is Putative nucleotidase BH1399, found in Halalkalibacterium halodurans (strain ATCC BAA-125 / DSM 18197 / FERM 7344 / JCM 9153 / C-125) (Bacillus halodurans).